A 609-amino-acid chain; its full sequence is Alpha-fetoprotein (609 aa).

A signal peptide spans 1–18; sequence MKWVESIFLIFLLNFTES. 3 consecutive Albumin domains span residues 19 to 210, 211 to 402, and 403 to 601; these read RTLH…ATVT, KELR…EELQ, and KYIQ…KLIS. A Cu(2+)-binding site is contributed by His22. Asn42 carries N-linked (GlcNAc...) asparagine glycosylation. 8 cysteine pairs are disulfide-bonded: Cys99-Cys114, Cys113-Cys124, Cys148-Cys193, Cys192-Cys201, Cys224-Cys270, Cys269-Cys277, Cys289-Cys303, and Cys302-Cys313. A phosphoserine mark is found at Ser111, Ser115, and Ser117. N-linked (GlcNAc...) asparagine glycosylation is present at Asn251. Ser344 is modified (phosphoserine). 7 disulfide bridges follow: Cys384–Cys393, Cys416–Cys462, Cys461–Cys472, Cys485–Cys501, Cys500–Cys511, Cys538–Cys583, and Cys582–Cys591. A Phosphoserine modification is found at Ser444.

Belongs to the ALB/AFP/VDB family. As to quaternary structure, dimeric and trimeric forms have been found in addition to the monomeric form. As to expression, plasma. Synthesized by the fetal liver and yolk sac.

The protein localises to the secreted. Its function is as follows. Binds copper, nickel, and fatty acids as well as, and bilirubin less well than, serum albumin. The chain is Alpha-fetoprotein (AFP) from Pan troglodytes (Chimpanzee).